Consider the following 200-residue polypeptide: DNA dC-&gt;dU-editing enzyme APOBEC-3H (200 aa).

The CMP/dCMP-type deaminase domain occupies 4-126 (LTAETFRLQF…KPQQKGLRLL (123 aa)). Histidine 54 contributes to the Zn(2+) binding site. Catalysis depends on glutamate 56, which acts as the Proton donor. Positions 85 and 88 each coordinate Zn(2+). Residues 160-182 (YKMLEELDKNSRAIKRRLERIKI) are a coiled coil.

Belongs to the cytidine and deoxycytidylate deaminase family. In terms of assembly, homodimer. Interacts with AGO1, AGO2 and AGO3. It depends on Zn(2+) as a cofactor. In terms of processing, (Microbial infection) Following infection by some HIV-1 strains, such as isolate BRU/LAI, can be ubiquitinated by a cullin-5-RING E3 ubiquitin-protein ligase complex (ECS complex) hijacked by the HIV-1 Vif protein, leading to its degradation. Ubiquitination by the ECS complex is however less efficent compared to APOBEC3G or APOBEC3G. Expressed in lymphoid organs. Also detected in non-lymphoid tissues including lung, testis, ovary, fetal liver and skin.

It localises to the cytoplasm. Its subcellular location is the nucleus. The protein localises to the P-body. The enzyme catalyses a 2'-deoxycytidine in single-stranded DNA + H2O + H(+) = a 2'-deoxyuridine in single-stranded DNA + NH4(+). APOBEC3H activity is regulated by RNA. While RNA-binding inhibits the DNA deaminase activity, double-stranded RNA is required for HIV-1 restriction by promoting APOBEC3H homodimerization and packaging into retroviral nucleocapsids. Its activity is regulated as follows. (Microbial infection) Antiviral activity is inhibited to some extent by the HIV-1 virion infectivity factor (VIF), that prevents its incorporation into progeny virions by both inhibiting its translation and/or by inducing its ubiquitination and subsequent degradation by the 26S proteasome. DNA deaminase (cytidine deaminase) which acts as an inhibitor of retrovirus replication and retrotransposon mobility via deaminase-dependent and -independent mechanisms. The A3H-var/haplotype 2 exhibits antiviral activity against vif-deficient HIV-1. After the penetration of retroviral nucleocapsids into target cells of infection and the initiation of reverse transcription, it can induce the conversion of cytosine to uracil in the minus-sense single-strand viral DNA, leading to G-to-A hypermutations in the subsequent plus-strand viral DNA. The resultant detrimental levels of mutations in the proviral genome, along with a deamination-independent mechanism that works prior to the proviral integration, together exert efficient antiretroviral effects in infected target cells. Selectively targets single-stranded DNA and does not deaminate double-stranded DNA or single- or double-stranded RNA. Exhibits antiviral activity also against T-cell leukemia virus type 1 (HTLV-1) and may inhibit the mobility of LTR and non-LTR retrotransposons. The polypeptide is DNA dC-&gt;dU-editing enzyme APOBEC-3H (Homo sapiens (Human)).